Consider the following 339-residue polypeptide: Putative methylthioribose-1-phosphate isomerase (339 aa).

Substrate contacts are provided by residues 43–45 (RGA), Arg86, and Gln191. Catalysis depends on Asp232, which acts as the Proton donor. 241 to 242 (NK) contributes to the substrate binding site.

The protein belongs to the eIF-2B alpha/beta/delta subunits family. MtnA subfamily.

It catalyses the reaction 5-(methylsulfanyl)-alpha-D-ribose 1-phosphate = 5-(methylsulfanyl)-D-ribulose 1-phosphate. Functionally, catalyzes the interconversion of methylthioribose-1-phosphate (MTR-1-P) into methylthioribulose-1-phosphate (MTRu-1-P). This chain is Putative methylthioribose-1-phosphate isomerase, found in Archaeoglobus fulgidus (strain ATCC 49558 / DSM 4304 / JCM 9628 / NBRC 100126 / VC-16).